Here is a 430-residue protein sequence, read N- to C-terminus: Dihydrofolate synthase/folylpolyglutamate synthase (430 aa).

Glycine 51–serine 54 is an ATP binding site. Serine 75 is a binding site for Mg(2+). Threonine 114–glycine 117 is a 7,8-dihydropteroate binding site. Glutamate 145 is a binding site for Mg(2+). Phenylalanine 152–serine 154 serves as a coordination point for 7,8-dihydropteroate. Histidine 172 contributes to the Mg(2+) binding site. Residues glutamine 263, arginine 302, and aspartate 315 each contribute to the ATP site.

This sequence belongs to the folylpolyglutamate synthase family. In terms of assembly, monomer. It depends on Mg(2+) as a cofactor.

The catalysed reaction is 7,8-dihydropteroate + L-glutamate + ATP = 7,8-dihydrofolate + ADP + phosphate + H(+). The enzyme catalyses (6S)-5,6,7,8-tetrahydrofolyl-(gamma-L-Glu)(n) + L-glutamate + ATP = (6S)-5,6,7,8-tetrahydrofolyl-(gamma-L-Glu)(n+1) + ADP + phosphate + H(+). It participates in cofactor biosynthesis; tetrahydrofolate biosynthesis; 7,8-dihydrofolate from 2-amino-4-hydroxy-6-hydroxymethyl-7,8-dihydropteridine diphosphate and 4-aminobenzoate: step 2/2. It functions in the pathway cofactor biosynthesis; tetrahydrofolylpolyglutamate biosynthesis. Functions in two distinct reactions of the de novo folate biosynthetic pathway. Catalyzes the addition of a glutamate residue to dihydropteroate (7,8-dihydropteroate or H2Pte) to form dihydrofolate (7,8-dihydrofolate monoglutamate or H2Pte-Glu). Also catalyzes successive additions of L-glutamate to tetrahydrofolate, leading to folylpolyglutamate derivatives. The polypeptide is Dihydrofolate synthase/folylpolyglutamate synthase (folC) (Bacillus subtilis (strain 168)).